A 144-amino-acid chain; its full sequence is MYFVDRSKIEKTLGFFEHQLALFDSQTDWQSEIGELALQRIGHLLIECILDTGNDMIDGFIMRDPGSYDDIMDILVDEKVVTEKEGDELKKLIAYRKTLVQQYLLADSGELYRLIKAHQTALQDFPKRIRSYLETELGPVSAFK.

Arg-96 is an active-site residue. Positions 96–103 match the RX(4)HXY motif motif; the sequence is RKTLVQQY.

Belongs to the HepT RNase toxin family. Homodimer, probably forms a complex with cognate antitoxin YutD.

Probable toxic component of a putative type VII toxin-antitoxin (TA) system, probably an RNase. Probably neutralized by cognate antitoxin YutD. The sequence is that of Putative RNase YutE (yutE) from Bacillus subtilis (strain 168).